We begin with the raw amino-acid sequence, 154 residues long: Transcriptional repressor NrdR (154 aa).

A zinc finger spans residues 3-34 (CPFCRHPDSRVVDSRETDEGQAIRRRRSCPEC). One can recognise an ATP-cone domain in the interval 46–136 (LAVVKRSGVT…VYRSFSSAED (91 aa)).

It belongs to the NrdR family. Requires Zn(2+) as cofactor.

Its function is as follows. Negatively regulates transcription of bacterial ribonucleotide reductase nrd genes and operons by binding to NrdR-boxes. The sequence is that of Transcriptional repressor NrdR from Mycolicibacterium gilvum (strain PYR-GCK) (Mycobacterium gilvum (strain PYR-GCK)).